The following is a 343-amino-acid chain: Small ribosomal subunit biogenesis GTPase RsgA (343 aa).

The region spanning 116–275 (RGQLKPVAAN…LIDSPGIREF (160 aa)) is the CP-type G domain. Residues 163–166 (NKAD) and 217–225 (GQSGVGKSS) contribute to the GTP site. 4 residues coordinate Zn(2+): Cys-299, Cys-304, His-306, and Cys-312.

It belongs to the TRAFAC class YlqF/YawG GTPase family. RsgA subfamily. In terms of assembly, monomer. Associates with 30S ribosomal subunit, binds 16S rRNA. Requires Zn(2+) as cofactor.

Its subcellular location is the cytoplasm. In terms of biological role, one of several proteins that assist in the late maturation steps of the functional core of the 30S ribosomal subunit. Helps release RbfA from mature subunits. May play a role in the assembly of ribosomal proteins into the subunit. Circularly permuted GTPase that catalyzes slow GTP hydrolysis, GTPase activity is stimulated by the 30S ribosomal subunit. The sequence is that of Small ribosomal subunit biogenesis GTPase RsgA from Pseudomonas syringae pv. tomato (strain ATCC BAA-871 / DC3000).